Reading from the N-terminus, the 1129-residue chain is MEADWNELVTAQLSPPGSHPPAVPISTFAFDTTQELLWTGNNQGRVTSLYGPSLERYTSYRGHATSDGPVKQFLFTDKGVLSISRQSVHYSHRRGLTQWHLTSPDFKDLKCMNFTSKGTREILIAGCQEQMFKVDVEKGIVVDTLPVDAQYTIMKRAGQYLCAATKTGGIHILDSNSLSVIKVFEGHTGSISDMDAKGDFLATCGWSPRQQYAYMLDPFTNVFSLKTLKQLAPVPFHTGAAFVRMHPRMSTTAIIASQNGQMQVIDLMNPDSANLRQLNLYDSYLAGFEMAPSGEAFALADSNSNVHLWGSPAKVHFPEYSNPTEFADHVIPPASMDWSLDTPLNTIGMPYYKETLLSGWPSHMVFEVGAPPPKIDGAILSNMTRTDMGFFAKNPRTKRRNQIEVTRQTDRSSDSLTPPKFLSEKSRASLSLSEANAKAVETMETLTDLHLDDVTRKDVPAMYGNVEIKYSKFGVDDFDFAYYNQTPFSGLETHITNSYANSLLQLFRFTPLIRNLALQHTASPCLFESCLLCELGFLIDMLEKAAGLNCQASNFLKTFSGLSNAVSLNLLEEFAPNVALTSMIQNLNRFLLDKISEEFRQMLPSHGGTSLMDQVLETQARASMRCAQCANETIRGGKNFVNELVYPAKHVMKNTRIPRPTFSQILKASVERQDQTRGWCTKCNRYQQMVQRKTIQSVPGVLMLNAAIQTHEAKLLWSIPNWLPHEIGIIVDQGQFYCFEGQDLKLHLQRGVFDIMVYELVGVVADINSGEHQKPHLVATINTGPSSREPDAEDKWHLFNDFLVRPIPREEALRFEPSWKLPSVLTFQTKSARNKIDDSWKENLDTSILYRWWSSNPTPPDDKFKLLQVSTEAPRPGYPVAIDAEFIRLQAEEIEMKADGTRQTIRPDRKGLARVSVCRGEGEHAGLPFIDDYIAVTEQVVDYLTEWSGISPGDLNRETSPHAPVSLKHAYKKLWLLLNLGCVFVGHSLANDFRTINIHVPRSQVVDTSNLFFLPDFKRKLNLKFLAWCVLKEQIQQDTHDSIEDATTALKLWRKYEEFVDAGVLEPMLNDIYATGSQVKFKAPGSGNRNSMPAGMTATGAGRDTPEPMTTPKKGGAFGGVGFRSPMRR.

5 WD repeats span residues 20-60 (PPAV…YTSY), 104-146 (PDFK…DTLP), 148-183 (DAQYTIMKRAGQYLCAATKTGGIHILDSNSLSVIKV), 186-226 (GHTG…FSLK), and 280-319 (LYDSYLAGFEMAPSGEAFALADSNSNVHLWGSPAKVHFPE). The linker stretch occupies residues 320-457 (YSNPTEFADH…DLHLDDVTRK (138 aa)). The disordered stretch occupies residues 396–427 (RTKRRNQIEVTRQTDRSSDSLTPPKFLSEKSR). Residues 458 to 830 (DVPAMYGNVE…LPSVLTFQTK (373 aa)) enclose the USP domain. Residues 880 to 1052 (VAIDAEFIRL…IEDATTALKL (173 aa)) form the Exonuclease domain. A divalent metal cation is bound by residues aspartate 883, glutamate 885, aspartate 992, and aspartate 1045. The segment at 1083–1129 (APGSGNRNSMPAGMTATGAGRDTPEPMTTPKKGGAFGGVGFRSPMRR) is disordered.

It belongs to the peptidase C19 family. PAN2 subfamily. Forms a heterotrimer with an asymmetric homodimer of the regulatory subunit PAN3 to form the poly(A)-nuclease (PAN) deadenylation complex. A divalent metal cation is required as a cofactor.

Its subcellular location is the cytoplasm. It carries out the reaction Exonucleolytic cleavage of poly(A) to 5'-AMP.. Positively regulated by the regulatory subunit PAN3. In terms of biological role, catalytic subunit of the poly(A)-nuclease (PAN) deadenylation complex, one of two cytoplasmic mRNA deadenylases involved in mRNA turnover. PAN specifically shortens poly(A) tails of RNA and the activity is stimulated by poly(A)-binding protein PAB1. PAN deadenylation is followed by rapid degradation of the shortened mRNA tails by the CCR4-NOT complex. Deadenylated mRNAs are then degraded by two alternative mechanisms, namely exosome-mediated 3'-5' exonucleolytic degradation, or deadenylation-dependent mRNA decaping and subsequent 5'-3' exonucleolytic degradation by XRN1. May also be involved in post-transcriptional maturation of mRNA poly(A) tails. The chain is PAN2-PAN3 deadenylation complex catalytic subunit PAN2 from Phaeosphaeria nodorum (strain SN15 / ATCC MYA-4574 / FGSC 10173) (Glume blotch fungus).